Reading from the N-terminus, the 316-residue chain is 4-hydroxyphenylacetate decarboxylase activating enzyme (316 aa).

Residues 20 to 307 (HDGPGCRTTV…QDIFLDNGIA (288 aa)) form the Radical SAM core domain. Residues Cys-34, Cys-38, Cys-41, Cys-60, Cys-66, Cys-69, and Cys-105 each coordinate [4Fe-4S] cluster. S-adenosyl-L-methionine is bound at residue 40-42 (WCA). The 4Fe-4S ferredoxin-type domain occupies 84–115 (NKPVIDWNICKDCESFECVNSCYYNAFKLCAK). Residues Gly-144, 193–195 (DIK), and His-267 each bind S-adenosyl-L-methionine.

It belongs to the organic radical-activating enzymes family. As to quaternary structure, monomer. It depends on [4Fe-4S] cluster as a cofactor.

The catalysed reaction is glycyl-[protein] + reduced [flavodoxin] + S-adenosyl-L-methionine = glycin-2-yl radical-[protein] + semiquinone [flavodoxin] + 5'-deoxyadenosine + L-methionine + H(+). Catalyzes activation of 4-hydroxyphenylacetate decarboxylase under anaerobic conditions by generation of an organic free radical on a glycine residue, via a homolytic cleavage of S-adenosyl-L-methionine (SAM). This Clostridioides difficile (strain CD196) (Peptoclostridium difficile) protein is 4-hydroxyphenylacetate decarboxylase activating enzyme.